We begin with the raw amino-acid sequence, 511 residues long: Acetylcholine receptor subunit alpha-type unc-38 (511 aa).

The first 16 residues, 1-16 (MRSFWLFLLLLLFCIS), serve as a signal peptide directing secretion. Over 17–261 (FIKLTEGNED…QLRRKPLFYT (245 aa)) the chain is Extracellular. An N-linked (GlcNAc...) asparagine glycan is attached at asparagine 124. A disulfide bridge links cysteine 151 with cysteine 165. N-linked (GlcNAc...) asparagine glycosylation is present at asparagine 202. Cysteines 238 and 239 form a disulfide. 3 helical membrane passes run 262–282 (VNLV…FYLP), 291–311 (LCIS…EIIP), and 324–344 (LLFT…SLNL). Topologically, residues 345–464 (HFRTPTTHLM…WKYVAMVLDR (120 aa)) are cytoplasmic. Residues 465–485 (LFLLIFSIACFVGTVIILLRA) traverse the membrane as a helical segment.

The protein belongs to the ligand-gated ion channel (TC 1.A.9) family. Acetylcholine receptor (TC 1.A.9.1) subfamily. In terms of assembly, component of nicotinic acetylcholine receptor. In muscles, composed of 2 non-alpha subunits lev-1 and unc-29, and 3 alpha subunits unc-38, unc-63 and lev-8. In cholinergic motoneurons, composed of 2 non-alpha subunits acr-2 and acr-3, and 3 alpha subunits unc-38, unc-63 and acr-12.

It is found in the postsynaptic cell membrane. It localises to the cell membrane. Alpha subunit of nicotinic acetylcholine receptor (nAChR). Probably acts in cholinergic motoneurons to regulate presynaptic neurotransmitter release, thereby ensuring normal level of excitation of cholinergic motoneurons during locomotion. Involved in nAChR sensitivity to nicotine. This is Acetylcholine receptor subunit alpha-type unc-38 (unc-38) from Caenorhabditis elegans.